We begin with the raw amino-acid sequence, 95 residues long: MNLKPLGDRIVIKILEAEEKTESGIVLPEKAKEKPQEGEVVAVGSGKTLDDGSKVEPEVKAGDKVVYSKFAGNEVEVDGEEYLIMRQDDILAVIE.

The segment at 36–55 is disordered; it reads QEGEVVAVGSGKTLDDGSKV.

The protein belongs to the GroES chaperonin family. Heptamer of 7 subunits arranged in a ring. Interacts with the chaperonin GroEL.

It is found in the cytoplasm. Functionally, together with the chaperonin GroEL, plays an essential role in assisting protein folding. The GroEL-GroES system forms a nano-cage that allows encapsulation of the non-native substrate proteins and provides a physical environment optimized to promote and accelerate protein folding. GroES binds to the apical surface of the GroEL ring, thereby capping the opening of the GroEL channel. This Natranaerobius thermophilus (strain ATCC BAA-1301 / DSM 18059 / JW/NM-WN-LF) protein is Co-chaperonin GroES.